The primary structure comprises 1544 residues: Protein mahjong (1544 aa).

The segment at 1–110 is disordered; the sequence is MSEGSGSENA…AAADRRQATK (110 aa). The span at 10–35 shows a compositional bias: low complexity; sequence AAAAEAAAEAEAATEAALMAEAVAVA. Positions 38-91 are enriched in acidic residues; that stretch reads SDEEEQPEAEDMPEQAGDNQEEDAAEQQDGGEPEADEDADADDAMSVENAENES. S565 and S569 each carry phosphoserine. The LisH domain maps to 912–944; it reads NKQQLYQLIFEHLESNGLSQTAQMLQREVGLPL. Disordered stretches follow at residues 946–973 and 987–1059; these read TPTTRSFHQSPFDYKSLPSGSSSLSRNR and GNGD…LAED. A Phosphoserine modification is found at S955. Positions 961–971 are enriched in low complexity; it reads SLPSGSSSLSR. The segment covering 1016–1027 has biased composition (polar residues); sequence PNFSSLNTTQTP. 2 consecutive short sequence motifs (DWD box) follow at residues 1302–1309 and 1338–1345; these read VLWDVRSG and EVWDLRTF. Disordered stretches follow at residues 1447–1475 and 1487–1544; these read KSERSEEEDDEEVPESDEDGSDTGSENTF and LRNL…SSDD. Acidic residues-rich tracts occupy residues 1451–1467 and 1495–1535; these read SEEEDDEEVPESDEDGS and NDDE…DVLE.

Belongs to the VPRBP/DCAF1 family. In terms of assembly, component of the CUL4-RBX1-DDB1-DCAF1 E3 ubiquitin-protein ligase complex. Interacts with l(2)gl.

It is found in the nucleus. It functions in the pathway protein modification; protein ubiquitination. In terms of biological role, probable substrate recognition component of tsome E3 ubiquitin-protein ligase complex. Plays a key role in cell competition via its interaction with l(2)gl. The chain is Protein mahjong (mahj) from Drosophila melanogaster (Fruit fly).